The chain runs to 295 residues: Ethanolamine ammonia-lyase small subunit (295 aa).

Adenosylcob(III)alamin contacts are provided by V207, E228, and C258.

The protein belongs to the EutC family. The basic unit is a heterodimer which dimerizes to form tetramers. The heterotetramers trimerize; 6 large subunits form a core ring with 6 small subunits projecting outwards. Requires adenosylcob(III)alamin as cofactor.

The protein localises to the bacterial microcompartment. The enzyme catalyses ethanolamine = acetaldehyde + NH4(+). It functions in the pathway amine and polyamine degradation; ethanolamine degradation. Its function is as follows. Catalyzes the deamination of various vicinal amino-alcohols to oxo compounds. Allows this organism to utilize ethanolamine as the sole source of nitrogen and carbon in the presence of external vitamin B12. The chain is Ethanolamine ammonia-lyase small subunit from Escherichia coli (strain UTI89 / UPEC).